We begin with the raw amino-acid sequence, 670 residues long: DNA ligase (670 aa).

Residues 32–36, 81–82, and Glu-113 contribute to the NAD(+) site; these read DAEYD and SL. The active-site N6-AMP-lysine intermediate is the Lys-115. Positions 136, 173, 290, and 314 each coordinate NAD(+). Cys-408, Cys-411, Cys-426, and Cys-432 together coordinate Zn(2+). One can recognise a BRCT domain in the interval 592 to 670; that stretch reads EIDSPFAGKT…EAEMIRLLGE (79 aa).

The protein belongs to the NAD-dependent DNA ligase family. LigA subfamily. Mg(2+) is required as a cofactor. Requires Mn(2+) as cofactor.

It catalyses the reaction NAD(+) + (deoxyribonucleotide)n-3'-hydroxyl + 5'-phospho-(deoxyribonucleotide)m = (deoxyribonucleotide)n+m + AMP + beta-nicotinamide D-nucleotide.. Functionally, DNA ligase that catalyzes the formation of phosphodiester linkages between 5'-phosphoryl and 3'-hydroxyl groups in double-stranded DNA using NAD as a coenzyme and as the energy source for the reaction. It is essential for DNA replication and repair of damaged DNA. This is DNA ligase from Yersinia pseudotuberculosis serotype O:1b (strain IP 31758).